A 578-amino-acid chain; its full sequence is Probable arginine--tRNA ligase, mitochondrial (578 aa).

A mitochondrion-targeting transit peptide spans 1–16 (MACGFRRSIACQLSRV). L-arginine contacts are provided by residues 133-135 (SPN), His-144, Tyr-322, Asp-326, and Gln-350. A 'HIGH' region motif is present at residues 133 to 144 (SPNIAKKFHVGH). Lys-568 is modified (N6-acetyllysine).

This sequence belongs to the class-I aminoacyl-tRNA synthetase family.

The protein localises to the mitochondrion membrane. It catalyses the reaction tRNA(Arg) + L-arginine + ATP = L-arginyl-tRNA(Arg) + AMP + diphosphate. In terms of biological role, catalyzes the attachment of arginine to tRNA(Arg) in a two-step reaction: arginine is first activated by ATP to form Arg-AMP and then transferred to the acceptor end of tRNA(Arg). This Mus musculus (Mouse) protein is Probable arginine--tRNA ligase, mitochondrial (Rars2).